The primary structure comprises 400 residues: Argininosuccinate synthase (400 aa).

8–16 (AYSGGLDTS) lines the ATP pocket. L-citrulline contacts are provided by Tyr87 and Ser92. Gly117 serves as a coordination point for ATP. Residues Thr119, Asn123, and Asp124 each coordinate L-aspartate. Asn123 is a binding site for L-citrulline. Residues Arg127, Ser175, Glu259, and Tyr271 each contribute to the L-citrulline site.

This sequence belongs to the argininosuccinate synthase family. Type 1 subfamily. Homotetramer.

Its subcellular location is the cytoplasm. It carries out the reaction L-citrulline + L-aspartate + ATP = 2-(N(omega)-L-arginino)succinate + AMP + diphosphate + H(+). It participates in amino-acid biosynthesis; L-arginine biosynthesis; L-arginine from L-ornithine and carbamoyl phosphate: step 2/3. In Frankia casuarinae (strain DSM 45818 / CECT 9043 / HFP020203 / CcI3), this protein is Argininosuccinate synthase.